Here is a 144-residue protein sequence, read N- to C-terminus: Small ribosomal subunit protein bS6 (144 aa).

Residues 95–144 (PVTTPSPMMQDDKSKPDENSRGTAAPTVNVADDSASGAQVVAAEENDTQS) are disordered. The segment covering 104-114 (QDDKSKPDENS) has biased composition (basic and acidic residues).

The protein belongs to the bacterial ribosomal protein bS6 family.

Functionally, binds together with bS18 to 16S ribosomal RNA. The polypeptide is Small ribosomal subunit protein bS6 (Nitrosomonas eutropha (strain DSM 101675 / C91 / Nm57)).